A 273-amino-acid chain; its full sequence is SPbeta prophage-derived uncharacterized protein YomF (273 aa).

Residues 119-149 (VIETLQGLIDEAEDTIIRMNERIAECERVTK) are a coiled coil.

In Bacillus subtilis (strain 168), this protein is SPbeta prophage-derived uncharacterized protein YomF (yomF).